The primary structure comprises 339 residues: Glycerol-3-phosphate dehydrogenase [NAD(P)+] (339 aa).

The NADPH site is built by S15, Y16, H36, and K110. Sn-glycerol 3-phosphate-binding residues include K110, G139, and T141. A143 serves as a coordination point for NADPH. Residues K195, D248, S258, R259, and N260 each contribute to the sn-glycerol 3-phosphate site. The Proton acceptor role is filled by K195. R259 lines the NADPH pocket. Positions 283 and 285 each coordinate NADPH.

This sequence belongs to the NAD-dependent glycerol-3-phosphate dehydrogenase family.

It localises to the cytoplasm. The enzyme catalyses sn-glycerol 3-phosphate + NAD(+) = dihydroxyacetone phosphate + NADH + H(+). The catalysed reaction is sn-glycerol 3-phosphate + NADP(+) = dihydroxyacetone phosphate + NADPH + H(+). Its pathway is membrane lipid metabolism; glycerophospholipid metabolism. In terms of biological role, catalyzes the reduction of the glycolytic intermediate dihydroxyacetone phosphate (DHAP) to sn-glycerol 3-phosphate (G3P), the key precursor for phospholipid synthesis. The chain is Glycerol-3-phosphate dehydrogenase [NAD(P)+] from Shigella flexneri serotype 5b (strain 8401).